A 164-amino-acid polypeptide reads, in one-letter code: Putative 4-hydroxy-4-methyl-2-oxoglutarate aldolase (164 aa).

Residues 79–82 (GDRL) and arginine 101 each bind substrate. A divalent metal cation is bound at residue aspartate 102.

The protein belongs to the class II aldolase/RraA-like family. As to quaternary structure, homotrimer. It depends on a divalent metal cation as a cofactor.

It carries out the reaction 4-hydroxy-4-methyl-2-oxoglutarate = 2 pyruvate. The enzyme catalyses oxaloacetate + H(+) = pyruvate + CO2. Its function is as follows. Catalyzes the aldol cleavage of 4-hydroxy-4-methyl-2-oxoglutarate (HMG) into 2 molecules of pyruvate. Also contains a secondary oxaloacetate (OAA) decarboxylase activity due to the common pyruvate enolate transition state formed following C-C bond cleavage in the retro-aldol and decarboxylation reactions. This Halorhodospira halophila (strain DSM 244 / SL1) (Ectothiorhodospira halophila (strain DSM 244 / SL1)) protein is Putative 4-hydroxy-4-methyl-2-oxoglutarate aldolase.